A 1318-amino-acid polypeptide reads, in one-letter code: DNA-directed RNA polymerase subunit beta' (1318 aa).

4 residues coordinate Zn(2+): C60, C62, C75, and C78. Mg(2+)-binding residues include D535, D537, and D539. 4 residues coordinate Zn(2+): C890, C967, C974, and C977.

It belongs to the RNA polymerase beta' chain family. As to quaternary structure, the RNAP catalytic core consists of 2 alpha, 1 beta, 1 beta' and 1 omega subunit. When a sigma factor is associated with the core the holoenzyme is formed, which can initiate transcription. Mg(2+) serves as cofactor. It depends on Zn(2+) as a cofactor.

The catalysed reaction is RNA(n) + a ribonucleoside 5'-triphosphate = RNA(n+1) + diphosphate. In terms of biological role, DNA-dependent RNA polymerase catalyzes the transcription of DNA into RNA using the four ribonucleoside triphosphates as substrates. This is DNA-directed RNA polymerase subunit beta' from Rhodococcus erythropolis (strain PR4 / NBRC 100887).